The chain runs to 461 residues: GTPase Era, mitochondrial (461 aa).

A mitochondrion-targeting transit peptide spans 1–35 (MAAPWLQRWRGAYAGPSGPLRLVRLHGVQRSSWRA). Residues 39–73 (AAGAFGAGPHPGPPQRAANPGPGPHPPPVATSREK) are disordered. In terms of domain architecture, Era-type G spans 89–354 (KVLRISIIGA…QYLLMQAKPG (266 aa)). The tract at residues 97–104 (GAPNSGKS) is G1. 97-104 (GAPNSGKS) is a binding site for GTP. A G2 region spans residues 123 to 127 (HTTRC). The segment at 144–147 (DTPG) is G3. Residues 144–148 (DTPGL) and 213–216 (NKVD) contribute to the GTP site. A G4 region spans residues 213 to 216 (NKVD). Residues 260-319 (KVTQTPPPENRARESPCQLETDKAQEGSSLDNSSDVKASESSLDTEAREQKPYKYGDQKN) are disordered. The span at 269–284 (NRARESPCQLETDKAQ) shows a compositional bias: basic and acidic residues. The segment covering 285–303 (EGSSLDNSSDVKASESSLD) has biased composition (polar residues). The span at 304 to 319 (TEAREQKPYKYGDQKN) shows a compositional bias: basic and acidic residues. The G5 stretch occupies residues 332-334 (LAA). Residues 380–461 (ILEYLPLEVP…RLKLKVEVKS (82 aa)) form the KH type-2 domain.

This sequence belongs to the TRAFAC class TrmE-Era-EngA-EngB-Septin-like GTPase superfamily. Era GTPase family.

The protein resides in the mitochondrion matrix. It is found in the mitochondrion inner membrane. Functionally, probable GTPase that plays a role in the mitochondrial ribosomal small subunit assembly. Specifically binds the 12S mitochondrial rRNA (12S mt-rRNA) to a 33 nucleotide section delineating the 3' terminal stem-loop region. May act as a chaperone that protects the 12S mt-rRNA on the 28S mitoribosomal subunit during ribosomal small subunit assembly. This Gallus gallus (Chicken) protein is GTPase Era, mitochondrial (ERAL1).